We begin with the raw amino-acid sequence, 134 residues long: Large ribosomal subunit protein bL12 (134 aa).

Belongs to the bacterial ribosomal protein bL12 family. In terms of assembly, homodimer. Part of the ribosomal stalk of the 50S ribosomal subunit. Forms a multimeric L10(L12)X complex, where L10 forms an elongated spine to which 2 to 4 L12 dimers bind in a sequential fashion. Binds GTP-bound translation factors.

Forms part of the ribosomal stalk which helps the ribosome interact with GTP-bound translation factors. Is thus essential for accurate translation. The sequence is that of Large ribosomal subunit protein bL12 from Chlamydia abortus (strain DSM 27085 / S26/3) (Chlamydophila abortus).